Reading from the N-terminus, the 249-residue chain is dTDP-4-amino-2,3,4,6-tetradeoxy-D-glucose N,N-dimethyltransferase (249 aa).

Arginine 30 contributes to the substrate binding site. S-adenosyl-L-methionine is bound by residues alanine 59, glutamate 80, and 102–103 (DI). Residues threonine 165, 178-182 (RLSHS), and arginine 241 each bind substrate.

Belongs to the methyltransferase TylM1/DesVI family. Homodimer. It depends on Mg(2+) as a cofactor.

It catalyses the reaction dTDP-4-amino-2,3,4,6-tetradeoxy-alpha-D-erythro-hexopyranose + 2 S-adenosyl-L-methionine = dTDP-alpha-D-forosamine + 2 S-adenosyl-L-homocysteine + 2 H(+). Functionally, involved in the biosynthesis of forosamine ((4-dimethylamino)-2,3,4,6-tetradeoxy-alpha-D-threo-hexopyranose), a highly deoxygenated sugar component of several bioactive natural products such as the insecticidal spinosyns A and D. Catalyzes the dimethylation of the C-4 amino group from dTDP-4-amino-2,3,4,6-tetradeoxy-alpha-D-glucose to yield dTDP-D-forosamine. The chain is dTDP-4-amino-2,3,4,6-tetradeoxy-D-glucose N,N-dimethyltransferase from Saccharopolyspora spinosa.